A 1255-amino-acid polypeptide reads, in one-letter code: MFPFQPMYPMQPMPYRNPFAAPRRPWFPRTDPFLAMQVQELTRSMANLTFKQRRDAPPEGPPAKKPKREAPQKQKGGGQGKKKKNQGKKKAKTGPPNPKAQSGNKKKPNKKPGKRQRMVMKLESDKTFPIMLEGKINGYACVVGGKLFRPMHVEGKIDNDVLAALKTKKASKYDLEYADVPQNMRADTFKYTHEKPQGYYSWHHGAVQYENGRFTVPKGVGAKGDSGRPILDNQGRVVAIVLGGVNEGSRTALSVVMWNEKGVTVKYTPENCEQWSLVTTMCLLANVTFPCAEPPICYDRKPAETLAMLSVNVDNPGYDELLEAAVKCPGRKRRSTEELFKEYKLTRPYMARCIRCAVGSCHSPIAIEAVKSDGHDGYVRLQTSSQYGLDSSGNLKGRTMRYDMHGTIEEIPLHQVSLHTSRPCHIVDGHGYFLLARCPAGDSITMEFKKGSVTHSCSVPYEVKFNPVGRELYTHPPEHGAEQACQVYAHDAQNRGAYVEMHLPGSEVDSSLISLSGSSVTVTPPVGTSALVKCKCGGTKISETINKAKQFSQCTKKEQCRAYRLQNDKWVYNSDKLPKAAGATLKGKLHVPFLLADGKCTVPLAPEPMITFGFRSVSLKLHPKNPTYLTTRQLADEPHYTHELISEPAVRNFTVTEKGWEFVWGNHPPKRFWAQETAPGNPHGLPHEVITHYYHRYPMSTILGLSICAAIVTVSVAASTWLFCKSRVSCLTPYRLTPNARMPLCLAVLCCARTARAETTWESLDHLWNNNQQMFWIQLLIPLAALIVVTRLLKCVCCVVPFLVVAGAAGAGAYEHATTMPSQAGISYNTIVNRAGYAPLPISITPTKIKLIPTVNLEYVTCHYKTGMDSPAIKCCGSQECTPTNRPDEQCKVFTGVYPFMWGGAYCFCDTENTQVSKAYVMKSDDCLADHAEAYKAHTASVQAFLNITVGEHSIVTTVYVNGETPVNFNGVKLTAGPLSTAWTPFDRKIVQYAGEIYNYDFPEYGAGQPGAFGDIQSRTVSSSDLYANTNLVLQRPKAGAIHVPYTQAPSGFEQWKKDKAPSLKFTAPFGCEIYTNPIRAENCAVGSIPLAFDIPDALFTRVSETPTLSAAECTLNECVYSSDFGGIATVKYSASKSGKCAVHVPSGTATLKEAAVELTEQGSATIHFSTANIHPEFRLQICTSYVTCKGDCHPPKDHIVTHPQYHAQTFTAAVSKTAWTWLTSLLGGSAVIIIIGLVLATIVAMYVLTNQKHN.

Residues 1 to 33 (MFPFQPMYPMQPMPYRNPFAAPRRPWFPRTDPF) form a necessary for nucleocapsid assembly and virus assembly region. The host transcription inhibition stretch occupies residues 33–68 (FLAMQVQELTRSMANLTFKQRRDAPPEGPPAKKPKR). Residues 41–48 (LTRSMANL) carry the Supraphysiological nuclear export signal motif. A disordered region spans residues 44–119 (SMANLTFKQR…KKPGKRQRMV (76 aa)). Residues 64–68 (KKPKR) carry the Nuclear localization signal motif. A compositionally biased stretch (basic residues) spans 80–92 (GKKKKNQGKKKAK). A binding to the viral RNA region spans residues 91–127 (AKTGPPNPKAQSGNKKKPNKKPGKRQRMVMKLESDKT). A Phosphothreonine modification is found at Thr93. Positions 104-118 (NKKKPNKKPGKRQRM) are enriched in basic residues. Residues 112–126 (PGKRQRMVMKLESDK) are ribosome-binding. Position 124 is a phosphoserine (Ser124). Residues 126–275 (KTFPIMLEGK…KYTPENCEQW (150 aa)) form the Peptidase S3 domain. Position 127 is a phosphothreonine (Thr127). The Charge relay system role is filled by His152. The segment at 168–173 (KKASKY) is interaction with spike glycoprotein E2. Active-site charge relay system residues include Asp174 and Ser226. The interval 260–264 (EKGVT) is interaction with spike glycoprotein E2. The tract at residues 276-287 (SLVTTMCLLANV) is functions as an uncleaved signal peptide for the precursor of protein E3/E2. Topologically, residues 276 to 701 (SLVTTMCLLA…HYYHRYPMST (426 aa)) are extracellular. Intrachain disulfides connect Cys282–Cys291, Cys353–Cys457, Cys356–Cys361, Cys424–Cys438, Cys485–Cys600, Cys534–Cys560, and Cys536–Cys554. N-linked (GlcNAc...) asparagine; by host glycosylation is present at Asn286. Asn652 is a glycosylation site (N-linked (GlcNAc...) asparagine; by host). Residues 702 to 722 (ILGLSICAAIVTVSVAASTWL) traverse the membrane as a helical segment. The Cytoplasmic portion of the chain corresponds to 723–757 (FCKSRVSCLTPYRLTPNARMPLCLAVLCCARTARA). The interval 725-729 (KSRVS) is interaction with the capsid protein. S-palmitoyl cysteine; by host attachment occurs at residues Cys730, Cys750, and Cys751. Residues 730–750 (CLTPYRLTPNARMPLCLAVLC) form a transient transmembrane before p62-6K protein processing region. A disulfide bridge connects residues Cys730 and Cys751. Topologically, residues 758-769 (ETTWESLDHLWN) are extracellular. The helical transmembrane segment at 770-790 (NNQQMFWIQLLIPLAALIVVT) threads the bilayer. Residue Arg791 is a topological domain, cytoplasmic. A helical membrane pass occupies residues 792–812 (LLKCVCCVVPFLVVAGAAGAG). Topologically, residues 813-1225 (AYEHATTMPS…SKTAWTWLTS (413 aa)) are extracellular. Cystine bridges form between Cys862–Cys927, Cys875–Cys907, Cys876–Cys909, and Cys881–Cys891. An E1 fusion peptide loop region spans residues 897 to 914 (VYPFMWGGAYCFCDTENT). N-linked (GlcNAc...) asparagine; by host glycosylation is found at Asn947 and Asn1083. 4 cysteine pairs are disulfide-bonded: Cys1072–Cys1084, Cys1114–Cys1189, Cys1119–Cys1193, and Cys1141–Cys1183. Residues 1226–1246 (LLGGSAVIIIIGLVLATIVAM) form a helical membrane-spanning segment. Topologically, residues 1247–1255 (YVLTNQKHN) are cytoplasmic.

As to quaternary structure, homodimer. Homomultimer. Interacts with host karyopherin KPNA4; this interaction allows the nuclear import of the viral capsid protein. Interacts with spike glycoprotein E2. Interacts with host IRAK1; the interaction leads to inhibition of IRAK1-dependent signaling. Part of a tetrameric complex composed of host CRM1, host importin alpha/beta dimer and the viral capsid; this complex blocks the receptor-mediated transport through the nuclear pore. Interacts with host phosphatase PPP1CA; this interaction dephosphorylates the capsid protein, which increases its ability to bind to the viral genome. The precursor of protein E3/E2 and E1 form a heterodimer shortly after synthesis. In terms of assembly, interacts with spike glycoprotein E2. The precursor of protein E3/E2 and E1 form a heterodimer shortly after synthesis. Processing of the precursor of protein E3/E2 into E2 and E3 results in a heterodimer of the spike glycoproteins E2 and E1. Spike at virion surface are constituted of three E2-E1 heterodimers. After target cell attachment and endocytosis, E1 change conformation to form homotrimers. Interacts with 6K protein. Interacts with host LDLRAD3; this interaction mediates viral entry to the host cell. As to quaternary structure, interacts with spike glycoprotein E1. Processing of the precursor of protein E3/E2 into E2 and E3 results in a heterodimer of the spike glycoproteins E2 and E1. Spike at virion surface are constituted of a trimer of E2-E1 heterodimers. Interacts with 6K protein. Interacts with host LDLRAD3; this interaction mediates viral entry to the host cell. Oligomer. Interacts with spike glycoprotein E1. Interacts with spike glycoprotein E2. In terms of processing, structural polyprotein: Specific enzymatic cleavages in vivo yield mature proteins. Capsid protein is auto-cleaved during polyprotein translation, unmasking a signal peptide at the N-terminus of the precursor of E3/E2. The remaining polyprotein is then targeted to the host endoplasmic reticulum, where host signal peptidase cleaves it into pE2, 6K and E1 proteins. pE2 is further processed to mature E3 and E2 by host furin in trans-Golgi vesicle. Phosphorylated on serine and threonine residues. Post-translationally, palmitoylated via thioester bonds. These palmitoylations may induce disruption of the C-terminus transmembrane. This would result in the reorientation of E2 C-terminus from lumenal to cytoplasmic side. In terms of processing, N-glycosylated. Palmitoylated via thioester bonds.

It localises to the virion. Its subcellular location is the host cytoplasm. It is found in the host cell membrane. The protein localises to the host nucleus. The protein resides in the virion membrane. It localises to the host Golgi apparatus. Its subcellular location is the host trans-Golgi network. It is found in the host endoplasmic reticulum. It catalyses the reaction Autocatalytic release of the core protein from the N-terminus of the togavirus structural polyprotein by hydrolysis of a -Trp-|-Ser- bond.. Its function is as follows. Forms an icosahedral capsid with a T=4 symmetry composed of 240 copies of the capsid protein surrounded by a lipid membrane through which penetrate 80 spikes composed of trimers of E1-E2 heterodimers. The capsid protein binds to the viral RNA genome at a site adjacent to a ribosome binding site for viral genome translation following genome release. Possesses a protease activity that results in its autocatalytic cleavage from the nascent structural protein. Following its self-cleavage, the capsid protein transiently associates with ribosomes, and within several minutes the protein binds to viral RNA and rapidly assembles into icosahedric core particles. The resulting nucleocapsid eventually associates with the cytoplasmic domain of the spike glycoprotein E2 at the cell membrane, leading to budding and formation of mature virions. In case of infection, new virions attach to target cells and after clathrin-mediated endocytosis their membrane fuses with the host endosomal membrane. This leads to the release of the nucleocapsid into the cytoplasm, followed by an uncoating event necessary for the genomic RNA to become accessible. The uncoating might be triggered by the interaction of capsid proteins with ribosomes. Binding of ribosomes would release the genomic RNA since the same region is genomic RNA-binding and ribosome-binding. Specifically inhibits interleukin-1 receptor-associated kinase 1/IRAK1-dependent signaling during viral entry, representing a means by which the alphaviruses may evade innate immune detection and activation prior to viral gene expression. Inhibits host transcription. Forms a tetrameric complex with XPO1/CRM1 and the nuclear import receptor importin. This complex blocks the central channel of host nuclear pores thereby inhibiting the receptor-mediated nuclear transport and thus the host mRNA and rRNA transcription. The inhibition of transcription is linked to a cytopathic effect on the host cell. Functionally, provides the signal sequence for the translocation of the precursor of protein E3/E2 to the host endoplasmic reticulum. Furin-cleaved E3 remains associated with spike glycoprotein E1 and mediates pH protection of the latter during the transport via the secretory pathway. After virion release from the host cell, the assembly protein E3 is gradually released in the extracellular space. In terms of biological role, plays a role in viral attachment to target host cell, by binding to the cell receptor LDLRAD3. Synthesized as a p62 precursor which is processed by furin at the cell membrane just before virion budding, giving rise to E2-E1 heterodimer. The p62-E1 heterodimer is stable, whereas E2-E1 is unstable and dissociate at low pH. p62 is processed at the last step, presumably to avoid E1 fusion activation before its final export to cell surface. E2 C-terminus contains a transitory transmembrane that would be disrupted by palmitoylation, resulting in reorientation of the C-terminal tail from lumenal to cytoplasmic side. This step is critical since E2 C-terminus is involved in budding by interacting with capsid proteins. This release of E2 C-terminus in cytoplasm occurs lately in protein export, and precludes premature assembly of particles at the endoplasmic reticulum membrane. Acts as a viroporin that participates in virus glycoprotein processing and transport to the plasma membrane, cell permeabilization and budding of viral particles. Disrupts the calcium homeostasis of the cell, probably at the endoplasmic reticulum level. This leads to cytoplasmic calcium elevation. Because of its lipophilic properties, the 6K protein is postulated to influence the selection of lipids that interact with the transmembrane domains of the glycoproteins, which, in turn, affects the deformability of the bilayer required for the extreme curvature that occurs as budding proceeds. Present in low amount in virions, about 3% compared to viral glycoproteins. Its function is as follows. Class II viral fusion protein. Fusion activity is inactive as long as E1 is bound to E2 in mature virion. After virus attachment to cell receptor LDLRAD3 and endocytosis, acidification of the endosome induce dissociation of E1/E2 heterodimer and concomitant trimerization of the E1 subunits. This E1 trimer is fusion active, and promotes release of viral nucleocapsid in cytoplasm after endosome and viral membrane fusion. Efficient fusion requires the presence of cholesterol and sphingolipid in the target membrane. In Venezuelan equine encephalitis virus (strain P676) (VEEV), this protein is Structural polyprotein.